The primary structure comprises 403 residues: Adenylate cyclase (403 aa).

Positions 1–16 (MSTEHTNTPRADSPQS) are enriched in polar residues. The interval 1 to 37 (MSTEHTNTPRADSPQSAAEAVRGARQHAPAATPAESD) is disordered. The segment at 31–60 (ATPAESDPILELAEAMEGPLRIPAHTPEAV) is pyruvate binding. Residues 238-347 (AVGFADLVSY…PTVNMAARLT (110 aa)) form the Guanylate cyclase domain. Asp-243 and Asp-287 together coordinate Mg(2+).

This sequence belongs to the adenylyl cyclase class-3 family. Homodimer. It depends on Mg(2+) as a cofactor.

The protein localises to the cytoplasm. It carries out the reaction ATP = 3',5'-cyclic AMP + diphosphate. Its activity is regulated as follows. Pyruvate-stimulated. In terms of biological role, plays essential roles in regulation of cellular metabolism by catalyzing the synthesis of a second messenger, cAMP. The protein is Adenylate cyclase (cya) of Glutamicibacter nicotianae (Arthrobacter nicotianae).